Reading from the N-terminus, the 624-residue chain is MPRAPFSLLALVLGLAFLAWAFSLAGTVGAPSGTVNYTTFLEDLKAGRVKEVVVRAGDTRIQGVLEDGSAFTTYAASPPDNATLEGWMARGVSVRVEPPQGQNALGFLWPLLLVGLLIGALYYFSRNGRAGPSDSAFSFTKSRARVLTEAPKVTFKDVAGAEEAKEELKEIVEFLKNPSRFHEMGARIPKGVLLVGPPGVGKTHLARAVAGEARVPFITASGSDFVEMFVGVGAARVRDLFETAKRHAPCIVFIDEIDAVGRKRGSGVGGGNDEREQTLNQLLVEMDGFEKDTAIVVMAATNRPDILDPALLRPGRFDRQIAIDAPDVKGREQILRIHARGKPLAEDVDLALLAKRTPGFVGADLENLLNEAALLAAREGRRKITMKDLEEAADRVMMGPAKKSLVLSPRDRRITAYHEAGHALAAHFLEHADGVHKVTIVPRGRALGFMMPRREDMLHWSRKRLLDQIAVALAGRAAEEIVFDDVTTGAENDFRQATELARRMITEWGMHPEFGPVAYAVREDTYLGGYDVRQYSEETAKRIDEAVRRLIEEQYQRVKALLLEKREVLERVAETLLERETLTAEEFQRVVEGLPLEAPEEAREEREPPRVVPKVKPGGALGGA.

The Cytoplasmic segment spans residues M1–S7. Residues L8 to V28 traverse the membrane as a helical segment. Over G29–N103 the chain is Periplasmic. Residues A104 to F124 traverse the membrane as a helical segment. The Cytoplasmic portion of the chain corresponds to S125–A624. Residues A159, G199 to T203, and H204 each bind ATP. A Zn(2+)-binding site is contributed by H418. The active site involves E419. Zn(2+) contacts are provided by H422 and D493. The interval P595–A624 is disordered. Residues E600–P609 show a composition bias toward basic and acidic residues.

It in the central section; belongs to the AAA ATPase family. This sequence in the C-terminal section; belongs to the peptidase M41 family. As to quaternary structure, the isolated soluble domain (residues 126-624) forms a stable hexamer in which the AAA+ domains (residues 126-400) are alternatively open or closed. Zn(2+) serves as cofactor.

The protein resides in the cell inner membrane. Its activity is regulated as follows. The proteolytic activity is dependent on ATP, both the ATPase and protease activities are inhibited by ADP. In terms of biological role, acts as a processive, ATP-dependent zinc metallopeptidase for both cytoplasmic and membrane proteins. Plays a role in the quality control of integral membrane proteins. Degrades preferentially unfolded substrates in a processive, ATP-dependent manner, usually after hydrophobic residues. This chain is ATP-dependent zinc metalloprotease FtsH, found in Thermus thermophilus (strain ATCC 27634 / DSM 579 / HB8).